Here is a 1051-residue protein sequence, read N- to C-terminus: MLPRKREIVAGEVEDLQKKTRAGEGEATREEGDAAMAGRGNEIDEDLHSRQLAVYGRETMKPLFGSNVLVSGLQGLGAEIAKNLVLAGVKSVTLHDDGNVELWDLSSNFFLSENDVGQNRAQACVQKLQELNNAVLVSALTGDLTKEHLSKFQAVVFTDISLDKAIEFDDYCHSHQPPIAFIKSEVRGLFGSVFCDFGPEFTVLDVDGEEPHTGIVASISNDNPALVSCVDDERLEFQDGDLVVFSEVHGMTELNDGKPRKVKNARPYSFFLEEDTSSFGAYVRGGIVTQVKPPKVIKFKPLKEAMSEPGEFLMSDFSKFERPPLLHLAFQALDKFRTELSRFPVAGSTDDVQRVIEYAISINDTLGDRKLEEIDKKLLHHFASGSRAVLNPMAAMFGGIVGQEVVKACSGKFHPLYQFFYFDSVESLPVDPLEPGDLKPKNSRYDAQISVFGSTLQNKLEEAKIFMVGSGALGCEFLKNLALMGISCSQNGNLTVTDDDVIEKSNLSRQFLFRDWNIGQPKSTVAATAAMVINPKLHVEALQNRASPETENVFNDAFWENLDAVVNALDNVTARMYIDSRCVYFQKPLLESGTLGAKCNTQMVIPHLTENYGASRDPPEKQAPMCTVHSFPHNIDHCLTWARSEFEGLLEKTPTEVNAFLSNPTTYISAARTAGDAQARDQLERVIECLDRDKCETFQDSITWARLKFEDYFSNRVKQLTFTFPEDSMTSSGAPFWSAPKRFPRPVEFSSSDPSQLSFILAAAILRAETFGIPISEWAKTPNKLAAEAVDKVIVPDFQPKQGVKIVTDEKATSLSSASVDDAAVIEELIAKLEEVSKTLPSGFHMNPIQFEKDDDTNFHMDVIAGFANMRARNYSIPEVDKLKAKFIAGRIIPAIATSTAMATGLVCLELYKALAGGHKVEDYRNTFANLAIPLFSIAEPVPPKTIKHQELSWTVWDRWTVTGNITLRELLEWLKEKGLNAYSISCGTSLLYNSMFPRHKERLDRKVVDVAREVAKMEVPSYRRHLDVVVACEDDDDNDVDIPLVSVYFR.

Over residues 1-32 the composition is skewed to basic and acidic residues; sequence MLPRKREIVAGEVEDLQKKTRAGEGEATREEG. The segment at 1–42 is disordered; the sequence is MLPRKREIVAGEVEDLQKKTRAGEGEATREEGDAAMAGRGNE. Tandem repeats lie at residues 56 to 194 and 453 to 605. Residues 56–605 are 2 approximate repeats; the sequence is GRETMKPLFG…GAKCNTQMVI (550 aa). ATP-binding positions include Ala-472, Asp-498, Arg-509, Lys-522, and 570–571; that span reads DN. The active-site Glycyl thioester intermediate is Cys-626.

It belongs to the ubiquitin-activating E1 family. Monomer.

The catalysed reaction is ATP + ubiquitin + [E1 ubiquitin-activating enzyme]-L-cysteine = AMP + diphosphate + S-ubiquitinyl-[E1 ubiquitin-activating enzyme]-L-cysteine.. The protein operates within protein modification; protein ubiquitination. In terms of biological role, activates ubiquitin by first adenylating its C-terminal glycine residue with ATP, and thereafter linking this residue to the side chain of a cysteine residue in E1, yielding a ubiquitin-E1 thioester and free AMP. In Triticum aestivum (Wheat), this protein is Ubiquitin-activating enzyme E1 2 (UBA2).